Consider the following 158-residue polypeptide: Small ribosomal subunit protein uS9 (158 aa).

The interval 1-20 (MTEAVETETVEPTTDEATAA) is disordered. Residues 10–20 (VEPTTDEATAA) show a composition bias toward low complexity.

Belongs to the universal ribosomal protein uS9 family.

The chain is Small ribosomal subunit protein uS9 from Mycobacterium sp. (strain JLS).